The following is a 349-amino-acid chain: Transcription factor HBP-1a (349 aa).

Polar residues predominate over residues 1-11 (MGSNDPSTPSK). Disordered regions lie at residues 1 to 39 (MGSN…WPGF), 101 to 196 (FHYP…NKPM), 224 to 277 (GATG…QAEC), and 312 to 349 (NTSL…QKEP). Low complexity predominate over residues 113–124 (PAGAQGAAPGAA). Polar residues predominate over residues 174-191 (NENGSAQNGVSHSSSHGT). The 64-residue stretch at 252–315 (ELKKQKRKLS…EELLSKNTSL (64 aa)) folds into the bZIP domain. The basic motif stretch occupies residues 254–273 (KKQKRKLSNRESARRSRLRK). Basic and acidic residues predominate over residues 261–277 (SNRESARRSRLRKQAEC). The leucine-zipper stretch occupies residues 280–315 (LGQRAEALKSENSSLRIELDRIKKEYEELLSKNTSL). The segment covering 334-349 (MNERGDTNGGSHQKEP) has biased composition (basic and acidic residues).

It belongs to the bZIP family. In terms of assembly, binds DNA as a dimer.

It localises to the nucleus. Binds to the hexamer motif 5'-ACGTCA-3' of histone gene promoters. The sequence is that of Transcription factor HBP-1a from Triticum aestivum (Wheat).